The chain runs to 141 residues: MVHSQLPVAAPLRLLCALLLLPSATMIPGGLSPRSVTDPDVQKAAEFAVQEYNALSTNAYYYKQLRIVEAQSQVVAGAKYYLTMELMKTKCAKTTGKPKVYKEIQNCELPPKAQQEKLTCHFQVWSRPWLEKVELTKMSCN.

A signal peptide spans methionine 1–methionine 26. One can recognise a Cystatin domain in the interval glycine 29–tryptophan 129. Residues glutamine 73–glycine 77 carry the Secondary area of contact motif. 2 cysteine pairs are disulfide-bonded: cysteine 91-cysteine 107 and cysteine 120-cysteine 140.

The protein belongs to the cystatin family. In terms of tissue distribution, expressed at a low level by the venom gland (at protein level).

It is found in the secreted. Inhibits various C1 cysteine proteases including cathepsin L, papain and cathepsin B. This protein has no toxic activity and its function in the venom is unknown. It may play a role as a housekeeping or regulatory protein. The sequence is that of Cystatin from Oxyuranus scutellatus scutellatus (Australian taipan).